We begin with the raw amino-acid sequence, 150 residues long: uncharacterized protein (150 aa).

This is an uncharacterized protein from Acidianus filamentous virus 1 (isolate United States/Yellowstone) (AFV-1).